The following is a 427-amino-acid chain: 3-phosphoshikimate 1-carboxyvinyltransferase (427 aa).

Residues Lys-22, Ser-23, and Arg-27 each contribute to the 3-phosphoshikimate site. A phosphoenolpyruvate-binding site is contributed by Lys-22. Positions 96 and 124 each coordinate phosphoenolpyruvate. 3-phosphoshikimate contacts are provided by Ser-169, Ser-170, Gln-171, Ser-197, Asp-313, Asn-336, and Lys-340. Phosphoenolpyruvate is bound at residue Gln-171. Asp-313 functions as the Proton acceptor in the catalytic mechanism. The phosphoenolpyruvate site is built by Arg-344, Arg-386, and Lys-411.

It belongs to the EPSP synthase family. In terms of assembly, monomer.

The protein localises to the cytoplasm. The enzyme catalyses 3-phosphoshikimate + phosphoenolpyruvate = 5-O-(1-carboxyvinyl)-3-phosphoshikimate + phosphate. It functions in the pathway metabolic intermediate biosynthesis; chorismate biosynthesis; chorismate from D-erythrose 4-phosphate and phosphoenolpyruvate: step 6/7. Its function is as follows. Catalyzes the transfer of the enolpyruvyl moiety of phosphoenolpyruvate (PEP) to the 5-hydroxyl of shikimate-3-phosphate (S3P) to produce enolpyruvyl shikimate-3-phosphate and inorganic phosphate. This Escherichia coli O9:H4 (strain HS) protein is 3-phosphoshikimate 1-carboxyvinyltransferase.